Here is a 289-residue protein sequence, read N- to C-terminus: Homeobox protein engrailed-2 (289 aa).

Composition is skewed to basic and acidic residues over residues M1–A12 and E60–R83. Disordered regions lie at residues M1–P166 and S179–A206. Residues V96 to G114 are compositionally biased toward gly residues. The segment covering L142–S160 has biased composition (low complexity). The segment at residues D200–T259 is a DNA-binding region (homeobox).

The protein belongs to the engrailed homeobox family.

It localises to the nucleus. This is Homeobox protein engrailed-2 (EN2) from Gallus gallus (Chicken).